The primary structure comprises 873 residues: Protein SEY1 (873 aa).

The tract at residues 1–20 is disordered; it reads MVANGHFAGSADGQHSSSYE. Topologically, residues 1–749 are cytoplasmic; it reads MVANGHFAGS…KRSAIGGITQ (749 aa). Residues 49-307 enclose the GB1/RHD3-type G domain; it reads GFNYHLISVF…IPADGFAVYA (259 aa). 59-66 contributes to the GTP binding site; sequence GSQSTGKS. A coiled-coil region spans residues 482–506; it reads SNYQQELSLYQKDLERTSGQLRRDE. Residues 677 to 703 form a disordered region; sequence DKWIGHTPSSATPADEEDLTPIGGVDD. Residues 690 to 703 are compositionally biased toward acidic residues; sequence ADEEDLTPIGGVDD. The chain crosses the membrane as a helical span at residues 750–770; that stretch reads VPLYFYGLLFALGWNEILAVL. Residues 771-773 lie on the Lumenal side of the membrane; the sequence is RNP. Residues 774–794 traverse the membrane as a helical segment; sequence VYFLLLFVCAIGAYITYQLNL. Topologically, residues 795–873 are cytoplasmic; that stretch reads WGPIIKMTEA…EDVDDDDDDF (79 aa). The disordered stretch occupies residues 828–873; it reads RQAMAMSGARNATEEHEMSRLSRKPAERGGRKNRADEDVDDDDDDF. A compositionally biased stretch (basic and acidic residues) spans 839–863; it reads ATEEHEMSRLSRKPAERGGRKNRAD. The span at 864–873 shows a compositional bias: acidic residues; that stretch reads EDVDDDDDDF.

Belongs to the TRAFAC class dynamin-like GTPase superfamily. GB1/RHD3 GTPase family. RHD3 subfamily.

It is found in the endoplasmic reticulum membrane. Functionally, cooperates with the reticulon proteins and tubule-shaping DP1 family proteins to generate and maintain the structure of the tubular endoplasmic reticulum network. Has GTPase activity, which is required for its function in ER organization. In Ajellomyces capsulatus (strain NAm1 / WU24) (Darling's disease fungus), this protein is Protein SEY1.